Here is a 133-residue protein sequence, read N- to C-terminus: Transcription antitermination protein NusB (133 aa).

This sequence belongs to the NusB family.

In terms of biological role, involved in transcription antitermination. Required for transcription of ribosomal RNA (rRNA) genes. Binds specifically to the boxA antiterminator sequence of the ribosomal RNA (rrn) operons. The sequence is that of Transcription antitermination protein NusB from Shewanella denitrificans (strain OS217 / ATCC BAA-1090 / DSM 15013).